The primary structure comprises 150 residues: Ribonuclease H (150 aa).

Residues 1–146 (MPELFAYTDG…ADELARAGMA (146 aa)) enclose the RNase H type-1 domain. Positions 9, 52, 74, and 138 each coordinate Mg(2+).

It belongs to the RNase H family. Monomer. Requires Mg(2+) as cofactor.

Its subcellular location is the cytoplasm. It catalyses the reaction Endonucleolytic cleavage to 5'-phosphomonoester.. Its function is as follows. Endonuclease that specifically degrades the RNA of RNA-DNA hybrids. This is Ribonuclease H from Roseobacter denitrificans (strain ATCC 33942 / OCh 114) (Erythrobacter sp. (strain OCh 114)).